The sequence spans 491 residues: Fibrinogen beta chain (491 aa).

A signal peptide spans 1 to 30; the sequence is MKRMVSWSFHKLKTMKHLLLLLLCVFLVKS. Residue Gln-31 is modified to Pyrrolidone carboxylic acid. The interval 44–75 is disordered; sequence RGHRPLDKKREEAPSLRPAPPPISGGGYRARP. The beta-chain polymerization, binding distal domain of another fibrin stretch occupies residues 45–47; the sequence is GHR. Basic and acidic residues predominate over residues 47-57; it reads RPLDKKREEAP. Residues 157 to 222 are a coiled coil; sequence KRQKQVKDNE…ESDVSAQMEY (66 aa). 2 cysteine pairs are disulfide-bonded: Cys-231–Cys-316 and Cys-241–Cys-270. The 257-residue stretch at 232-488 folds into the Fibrinogen C-terminal domain; the sequence is NIPVVSGKEC…KMSMKIRPFF (257 aa). N-linked (GlcNAc...) asparagine glycosylation occurs at Asn-394. A disulfide bridge connects residues Cys-424 and Cys-437.

In terms of assembly, heterohexamer; disulfide linked. Contains 2 sets of 3 non-identical chains (alpha, beta and gamma). The 2 heterotrimers are in head to head conformation with the N-termini in a small central domain. Post-translationally, conversion of fibrinogen to fibrin is triggered by thrombin, which cleaves fibrinopeptides A and B from alpha and beta chains, and thus exposes the N-terminal polymerization sites responsible for the formation of the soft clot. The soft clot is converted into the hard clot by factor XIIIA which catalyzes the epsilon-(gamma-glutamyl)lysine cross-linking between gamma chains (stronger) and between alpha chains (weaker) of different monomers. In terms of tissue distribution, detected in blood plasma (at protein level).

It localises to the secreted. Its function is as follows. Cleaved by the protease thrombin to yield monomers which, together with fibrinogen alpha (FGA) and fibrinogen gamma (FGG), polymerize to form an insoluble fibrin matrix. Fibrin has a major function in hemostasis as one of the primary components of blood clots. In addition, functions during the early stages of wound repair to stabilize the lesion and guide cell migration during re-epithelialization. Was originally thought to be essential for platelet aggregation, based on in vitro studies using anticoagulated blood. However subsequent studies have shown that it is not absolutely required for thrombus formation in vivo. Enhances expression of SELP in activated platelets. Maternal fibrinogen is essential for successful pregnancy. Fibrin deposition is also associated with infection, where it protects against IFNG-mediated hemorrhage. May also facilitate the antibacterial immune response via both innate and T-cell mediated pathways. The protein is Fibrinogen beta chain (FGB) of Homo sapiens (Human).